An 89-amino-acid chain; its full sequence is UPF0147 protein STK_04605 (89 aa).

This sequence belongs to the UPF0147 family.

The sequence is that of UPF0147 protein STK_04605 from Sulfurisphaera tokodaii (strain DSM 16993 / JCM 10545 / NBRC 100140 / 7) (Sulfolobus tokodaii).